Here is a 573-residue protein sequence, read N- to C-terminus: Mitochondrial distribution and morphology protein 34 (573 aa).

The 195-residue stretch at 1–195 folds into the SMP-LTD domain; the sequence is MAFNFNWSPL…LPAIIHRLSL (195 aa). Disordered stretches follow at residues 301-326, 349-433, 499-521, and 550-573; these read EGLG…SSPL, FSGY…RFPN, SREK…ITDA, and LVNN…AYGQ. Positions 306–316 are enriched in low complexity; it reads GLMSPGSPALS. The span at 360-373 shows a compositional bias: basic residues; it reads RHTKARPTKKRKKR. Over residues 374–385 the composition is skewed to basic and acidic residues; it reads VVDLRKQSKPTD. A compositionally biased stretch (low complexity) spans 396–409; the sequence is TETSTASTTFSSST.

Belongs to the MDM34 family. In terms of assembly, component of the ER-mitochondria encounter structure (ERMES) or MDM complex, composed of MMM1, MDM10, MDM12 and MDM34.

The protein localises to the mitochondrion outer membrane. In terms of biological role, component of the ERMES/MDM complex, which serves as a molecular tether to connect the endoplasmic reticulum (ER) and mitochondria. Components of this complex are involved in the control of mitochondrial shape and protein biogenesis, and function in nonvesicular lipid trafficking between the ER and mitochondria. MDM34 is required for the interaction of the ER-resident membrane protein MMM1 and the outer mitochondrial membrane-resident beta-barrel protein MDM10. The sequence is that of Mitochondrial distribution and morphology protein 34 from Uncinocarpus reesii (strain UAMH 1704).